The sequence spans 370 residues: Ornithine carbamoyltransferase, mitochondrial (370 aa).

The N-terminal 38 residues, 1-38, are a transit peptide targeting the mitochondrion; sequence MPSPLRTAPQPPLRAFHNPPALRRLYSSTSHSAATPAT. Residues 97 to 100, Arg-148, His-175, and Gln-178 each bind carbamoyl phosphate; that span reads STRT. L-ornithine contacts are provided by Asn-216, Asp-282, Ser-286, and Met-287. The active-site Proton acceptor is the Cys-324. Carbamoyl phosphate contacts are provided by residues 324 to 325 and Arg-351; that span reads CL.

This sequence belongs to the aspartate/ornithine carbamoyltransferase superfamily. OTCase family. In terms of assembly, homotrimer.

It localises to the mitochondrion matrix. It carries out the reaction carbamoyl phosphate + L-ornithine = L-citrulline + phosphate + H(+). The protein operates within amino-acid biosynthesis; L-arginine biosynthesis; L-arginine from L-ornithine and carbamoyl phosphate: step 1/3. The chain is Ornithine carbamoyltransferase, mitochondrial (argB) from Aspergillus niger.